A 311-amino-acid polypeptide reads, in one-letter code: ATP synthase gamma chain (311 aa).

The protein belongs to the ATPase gamma chain family. As to quaternary structure, F-type ATPases have 2 components, CF(1) - the catalytic core - and CF(0) - the membrane proton channel. CF(1) has five subunits: alpha(3), beta(3), gamma(1), delta(1), epsilon(1). CF(0) has three main subunits: a, b and c.

The protein resides in the cell membrane. In terms of biological role, produces ATP from ADP in the presence of a proton gradient across the membrane. The gamma chain is believed to be important in regulating ATPase activity and the flow of protons through the CF(0) complex. The polypeptide is ATP synthase gamma chain (Limosilactobacillus fermentum (strain NBRC 3956 / LMG 18251) (Lactobacillus fermentum)).